Reading from the N-terminus, the 80-residue chain is Acyl carrier protein (80 aa).

The region spanning 4–79 (DATLEKVRSI…DAVKYIEDKQ (76 aa)) is the Carrier domain. An O-(pantetheine 4'-phosphoryl)serine modification is found at Ser39.

The protein belongs to the acyl carrier protein (ACP) family. 4'-phosphopantetheine is transferred from CoA to a specific serine of apo-ACP by AcpS. This modification is essential for activity because fatty acids are bound in thioester linkage to the sulfhydryl of the prosthetic group.

The protein localises to the cytoplasm. It functions in the pathway lipid metabolism; fatty acid biosynthesis. In terms of biological role, carrier of the growing fatty acid chain in fatty acid biosynthesis. This Prochlorococcus marinus (strain MIT 9211) protein is Acyl carrier protein.